The primary structure comprises 208 residues: Uridine kinase (208 aa).

Position 12-19 (12-19) interacts with ATP; it reads GGSGGGKT.

It belongs to the uridine kinase family.

The protein localises to the cytoplasm. The enzyme catalyses uridine + ATP = UMP + ADP + H(+). It carries out the reaction cytidine + ATP = CMP + ADP + H(+). It participates in pyrimidine metabolism; CTP biosynthesis via salvage pathway; CTP from cytidine: step 1/3. The protein operates within pyrimidine metabolism; UMP biosynthesis via salvage pathway; UMP from uridine: step 1/1. The chain is Uridine kinase from Streptococcus equi subsp. equi (strain 4047).